The sequence spans 359 residues: Acyl-CoA desaturase (359 aa).

Residues 1 to 72 (MPAHLLQEEI…EGPKPKLEYV (72 aa)) are Cytoplasmic-facing. Residues 73-93 (WRNIILMGLLHLGALYGITLI) form a helical membrane-spanning segment. Position 75 (asparagine 75) interacts with substrate. Over 94–97 (PTCK) the chain is Lumenal. Residues 98 to 118 (IYTFLWVLFYYVISALGITAG) form a helical membrane-spanning segment. Topologically, residues 119–217 (VHRLWSHRTY…EKLVMFQRRY (99 aa)) are cytoplasmic. Positions 120 and 125 each coordinate Fe cation. Positions 120–125 (HRLWSH) match the Histidine box-1 motif. The substrate site is built by asparagine 148, arginine 155, and aspartate 156. The Fe cation site is built by histidine 157, histidine 160, and histidine 161. The Histidine box-2 motif lies at 157–161 (HRAHH). Substrate is bound by residues arginine 188 and lysine 189. A Phosphoserine modification is found at serine 203. A helical membrane pass occupies residues 218–237 (YKPGVLLLCFILPTLVPWYL). At 238 to 241 (WGES) the chain is on the lumenal side. The helical transmembrane segment at 242-263 (FQNSLFFATFLRYAVVLNATWL) threads the bilayer. Tryptophan 262 lines the substrate pocket. The Cytoplasmic segment spans residues 264-359 (VNSAAHMYGY…RTGEESYKSG (96 aa)). Fe cation contacts are provided by histidine 269, histidine 298, histidine 301, and histidine 302. The Histidine box-3 motif lies at 298–302 (HNYHH).

It belongs to the fatty acid desaturase type 1 family. Fe(2+) is required as a cofactor.

It localises to the endoplasmic reticulum membrane. It catalyses the reaction octadecanoyl-CoA + 2 Fe(II)-[cytochrome b5] + O2 + 2 H(+) = (9Z)-octadecenoyl-CoA + 2 Fe(III)-[cytochrome b5] + 2 H2O. Its function is as follows. Stearoyl-CoA desaturase that utilizes O(2) and electrons from reduced cytochrome b5 to introduce the first double bond into saturated fatty acyl-CoA substrates. Catalyzes the insertion of a cis double bond at the delta-9 position into fatty acyl-CoA substrates including palmitoyl-CoA and stearoyl-CoA. Gives rise to a mixture of 16:1 and 18:1 unsaturated fatty acids. Plays an important role in lipid biosynthesis. Plays an important role in regulating the expression of genes that are involved in lipogenesis and in regulating mitochondrial fatty acid oxidation. Plays an important role in body energy homeostasis. Contributes to the biosynthesis of membrane phospholipids, cholesterol esters and triglycerides. The protein is Acyl-CoA desaturase (SCD) of Ovis aries (Sheep).